The sequence spans 301 residues: Thyroxine 5-deiodinase (301 aa).

Residues 1–41 are Cytoplasmic-facing; that stretch reads MSRQAAPRWVVGEGRGTLGGAATMLRSLLLHSLRLCSQTAS. A helical; Signal-anchor for type II membrane protein membrane pass occupies residues 42 to 64; the sequence is CLVLFPRFLGTAFMLWLLDFLCI. At 65-301 the chain is on the extracellular side; that stretch reads RKHLLGRRRR…QLHGPQPRRV (237 aa). Residue Sec-167 is part of the active site. A non-standard amino acid (selenocysteine) is located at residue Sec-167.

Belongs to the iodothyronine deiodinase family. Monomer. Homodimer. May undergo minor heretodimerization with DIO1 and DIO2. As to expression, highly expressed in mammary gland. Detected at lower levels in kidney, and at very low levels in the other tissues.

The protein localises to the cell membrane. Its subcellular location is the endosome membrane. The catalysed reaction is 3,3',5'-triiodo-L-thyronine + iodide + A + H(+) = L-thyroxine + AH2. It catalyses the reaction 3,3'-diiodo-L-thyronine + iodide + A + H(+) = 3,3',5-triiodo-L-thyronine + AH2. It carries out the reaction 3-iodo-L-thyronine + iodide + A + H(+) = 3,5-diiodo-L-thyronine + AH2. The enzyme catalyses L-thyronine + iodide + A + H(+) = 3-iodo-L-thyronine + AH2. The catalysed reaction is 3',5'-diiodo-L-thyronine + iodide + A + H(+) = 3,3',5'-triiodo-L-thyronine + AH2. It catalyses the reaction 3'-iodo-L-thyronine + iodide + A + H(+) = 3,3'-diiodo-L-thyronine + AH2. It carries out the reaction 3,3',5'-triiodothyronamine + iodide + A + H(+) = 3,3',5,5'-tetraiodothyronamine + AH2. The enzyme catalyses 3',5'-diiodothyronamine + iodide + A + H(+) = 3,3',5'-triiodothyronamine + AH2. The catalysed reaction is 3,3'-diiodothyronamine + iodide + A + H(+) = 3,3',5-triiodothyronamine + AH2. It catalyses the reaction 3-iodothyronamine + iodide + A + H(+) = 3,5-diiodothyronamine + AH2. It carries out the reaction 3'-iodothyronamine + iodide + A + H(+) = 3,3'-diiodothyronamine + AH2. The enzyme catalyses thyronamine + iodide + A + H(+) = 3-iodothyronamine + AH2. In terms of biological role, plays a crucial role in the metabolism of thyroid hormones (TH) and has specific roles in TH activation and inactivation by deiodination. Catalyzes the deiodination of L-thyroxine (T4) to 3,3',5'-triiodothyronine (rT3), 3,5,3'-triiodothyronine (T3) to 3,3'-diiodothyronine (3,3'-T2), 3,5-diiodothyronine (3,5-T2) to 3-monoiodothyronine (3-T1), rT3 to 3',5'-diiodothyronine (3',5'-T2) and 3,3'-T2 to 3'-monoiodothyronine (3'-T1) via inner-ring deiodination (IRD). Catalyzes the deiodination of 3-T1 to L-thyronine (T0) via outer-ring deiodination (ORD). Catalyzes the tyrosyl ring deiodinations of 3,3',5,5'-tetraiodothyronamine, 3,3',5'-triiodothyronamine, 3,5,3'-triiodothyronamine, 3,5-diiodothyronamine, 3,3'-diiodothyronamine and 3-iodothyronamine. The sequence is that of Thyroxine 5-deiodinase (DIO3) from Bos taurus (Bovine).